A 285-amino-acid polypeptide reads, in one-letter code: Cytochrome P450 monooxygenase eupD (285 aa).

A signal peptide spans 1 to 19; sequence MSIAGLVTTLPWLMNMLRA. Cys-229 is a heme binding site.

This sequence belongs to the cytochrome P450 family. Requires heme as cofactor.

It functions in the pathway secondary metabolite biosynthesis; terpenoid biosynthesis. Cytochrome P450 monooxygenase; part of the gene cluster that mediates the biosynthesis of eupenifeldin, a bistropolone meroterpenoid that acts as an antitumor agent. The first step of eupenifeldin biosynthesis is the biosynthesis of 3-methylorcinaldehyde performed by the non-reducing polyketide synthase eupA. Oxidative dearomatization of 3-methylorcinaldehyde likely catalyzed by the FAD-dependent monooxygenase eupB is followed by oxidative ring expansion by the 2-oxoglutarate-dependent dioxygenase eupC to provide the first tropolone metabolite, tropolone stipitaldehyde. In parallel, generation of sesquiterpene alpha-humulene from farnesylpyrophosphate (FPP) is catalyzed by the terpene cyclase eupE. The cytochrome P450 monooxygenase eupD then hydroxylates humulene to humulenol. The putative Diels-Alderase eupF probably catalyzes the formation of the tropolone-humulene skeleton by linking humulenol and the polyketide moiety. The short-chain dehydrogenase/reductase eupG and the flavin-dependent monooxygenase eupH are also essential for eupenifeldin biosynthesis and are likely the additional decorating enzymes of the tropolone-humulene skeleton to produce final eupenifeldin or derivatives. The chain is Cytochrome P450 monooxygenase eupD from Phoma sp.